The following is a 400-amino-acid chain: Argininosuccinate synthase (400 aa).

ATP contacts are provided by residues 10 to 18 and alanine 38; that span reads AYSGGVDTS. Residue tyrosine 89 participates in L-citrulline binding. Position 119 (glycine 119) interacts with ATP. Positions 121, 125, and 126 each coordinate L-aspartate. Asparagine 125 provides a ligand contact to L-citrulline. Arginine 129, serine 177, serine 186, glutamate 262, and tyrosine 274 together coordinate L-citrulline.

This sequence belongs to the argininosuccinate synthase family. Type 1 subfamily. As to quaternary structure, homotetramer.

It localises to the cytoplasm. It catalyses the reaction L-citrulline + L-aspartate + ATP = 2-(N(omega)-L-arginino)succinate + AMP + diphosphate + H(+). It functions in the pathway amino-acid biosynthesis; L-arginine biosynthesis; L-arginine from L-ornithine and carbamoyl phosphate: step 2/3. Its activity is regulated as follows. Activity decreases to 53.9% and 18.4% in the presence of 1 mM and 5 mM arginine, respectively. Activity also decreases to 80.1%, 78.1% and 92.1% in the presence of 5 mM ornithine, lysine and succinate, respectively. Activity does not decrease in the presence of glutamate, glutamine or asparagine. Functionally, catalyzes the condensation of citrulline and aspartate into argininosuccinate, the immediate precursor of arginine. SyArgG is the rate-limiting step in arginine biosynthesis in Synechocystis PCC 6803. The polypeptide is Argininosuccinate synthase (Synechocystis sp. (strain ATCC 27184 / PCC 6803 / Kazusa)).